The sequence spans 340 residues: Phenylalanine--tRNA ligase alpha subunit (340 aa).

E251 contributes to the Mg(2+) binding site.

Belongs to the class-II aminoacyl-tRNA synthetase family. Phe-tRNA synthetase alpha subunit type 1 subfamily. As to quaternary structure, tetramer of two alpha and two beta subunits. The cofactor is Mg(2+).

The protein resides in the cytoplasm. It catalyses the reaction tRNA(Phe) + L-phenylalanine + ATP = L-phenylalanyl-tRNA(Phe) + AMP + diphosphate + H(+). The polypeptide is Phenylalanine--tRNA ligase alpha subunit (Porphyromonas gingivalis (strain ATCC 33277 / DSM 20709 / CIP 103683 / JCM 12257 / NCTC 11834 / 2561)).